Consider the following 1000-residue polypeptide: Lysine-specific histone demethylase 1 (1000 aa).

The interval 104-123 is disordered; that stretch reads RRPAGRRGRPALNTSNSLER. Residues 107–137 adopt a coiled-coil conformation; that stretch reads AGRRGRPALNTSNSLERNGTRYVSAEAPISV. The region spanning 153–249 is the SWIRM domain; the sequence is CYESAIASNL…YGCIYIISSL (97 aa). Residues 260 to 302, glutamate 301, and 328 to 329 each bind FAD; these read VAII…IYEA and LA. Residues 279 to 950 form a demethylase activity region; sequence LFAQYEQDFL…RCESQPIPED (672 aa). The stretch at 434–529 forms a coiled coil; sequence IGWYISIEAF…ADMLNSLAST (96 aa). The tract at residues 780–800 is disordered; sequence TYGTKRNAQQALGKEGERENK. Positions 841-921 form a DNA-binding region, HMG box; that stretch reads SRPSANPYLL…NYSTRLEEYQ (81 aa). 908 to 909 contacts FAD; it reads AR. A compositionally biased stretch (basic and acidic residues) spans 959 to 972; the sequence is EQEDEHLHPEKEGM. The tract at residues 959–1000 is disordered; that stretch reads EQEDEHLHPEKEGMSVENSDDDYHDDLDYEDSISEVFPDNFS. The segment covering 976–991 has biased composition (acidic residues); it reads NSDDDYHDDLDYEDSI.

The protein belongs to the flavin monoamine oxidase family. Component of the SWM histone demethylase complex composed of at least lsd1, lsd2, phf1 and phf2. Interacts directly with lsd2. Requires FAD as cofactor.

It is found in the nucleus. Catalytic component of the SWM histone demethylase complex that specifically demethylates H3K9me2, a specific tag for epigenetic transcriptional activation, thereby acting as a corepressor. Acts by oxidizing the substrate by FAD to generate the corresponding imine that is subsequently hydrolyzed. Has a role in regulating heterochromatin propagation and euchromatic transcription. Also has a gene activating role. This chain is Lysine-specific histone demethylase 1 (lsd1), found in Schizosaccharomyces pombe (strain 972 / ATCC 24843) (Fission yeast).